Consider the following 536-residue polypeptide: Chaperonin GroEL 2 (536 aa).

Residues 29-32, 86-90, glycine 412, and aspartate 495 contribute to the ATP site; these read TLGP and DGTTT.

It belongs to the chaperonin (HSP60) family. As to quaternary structure, forms a cylinder of 14 subunits composed of two heptameric rings stacked back-to-back. Interacts with the co-chaperonin GroES.

The protein localises to the cytoplasm. It carries out the reaction ATP + H2O + a folded polypeptide = ADP + phosphate + an unfolded polypeptide.. Its function is as follows. Together with its co-chaperonin GroES, plays an essential role in assisting protein folding. The GroEL-GroES system forms a nano-cage that allows encapsulation of the non-native substrate proteins and provides a physical environment optimized to promote and accelerate protein folding. The sequence is that of Chaperonin GroEL 2 from Arthrobacter sp. (strain FB24).